Reading from the N-terminus, the 426-residue chain is Selenocysteine lyase (426 aa).

An N6-(pyridoxal phosphate)lysine modification is found at K239. C367 functions as the S-selanylcysteine intermediate in the catalytic mechanism.

The protein belongs to the class-V pyridoxal-phosphate-dependent aminotransferase family. In terms of assembly, homodimer. Pyridoxal 5'-phosphate is required as a cofactor.

It localises to the cytoplasm. The protein resides in the cytosol. It catalyses the reaction L-selenocysteine + AH2 = hydrogenselenide + L-alanine + A + H(+). Its function is as follows. Catalyzes the decomposition of L-selenocysteine to L-alanine and elemental selenium. The protein is Selenocysteine lyase (scly) of Xenopus laevis (African clawed frog).